The primary structure comprises 306 residues: Leucine-rich repeat-containing protein 59 (306 aa).

Met-1 bears the N-acetylmethionine mark. Thr-2 is modified (N-acetylthreonine; in Leucine-rich repeat-containing protein 59, N-terminally processed). The Cytoplasmic segment spans residues 2-244 (TKAGSKGGNL…KPPPRKHTRS (243 aa)). 5 LRR repeats span residues 10–31 (NLRD…NEVP), 40–62 (KATV…CGLT), 63–84 (HLVK…FGRL), 86–107 (NLQH…FAQL), and 109–128 (SLKW…AKVA). Phosphoserine is present on residues Ser-23 and Ser-25. The residue at position 73 (Lys-73) is an N6-succinyllysine. Lys-135 carries the N6-acetyllysine modification. Positions 152 to 216 (QADQERERQR…KAAKREQEKK (65 aa)) form a coiled coil. Positions 175–221 (AKQRAKEAQERELRKREKAEEKERRRKEYDALKAAKREQEKKPKKET) are enriched in basic and acidic residues. The tract at residues 175–241 (AKQRAKEAQE…RPRKPPPRKH (67 aa)) is disordered. Residues 229 to 241 (SSSRPRKPPPRKH) are compositionally biased toward basic residues. The chain crosses the membrane as a helical span at residues 245–265 (WAVLKLLLLLLLCVAGGLVAC). Over 266 to 306 (RVTELQQQPLCTSVNTIYDNAVRGLRSHDILQWVLQTDSQQ) the chain is Lumenal.

Can form homodimers. Interacts with SGO1. Interacts with FGF1.

It is found in the microsome membrane. Its subcellular location is the endoplasmic reticulum membrane. The protein localises to the nucleus envelope. Functionally, required for nuclear import of FGF1, but not that of FGF2. Might regulate nuclear import of exogenous FGF1 by facilitating interaction with the nuclear import machinery and by transporting cytosolic FGF1 to, and possibly through, the nuclear pores. In Bos taurus (Bovine), this protein is Leucine-rich repeat-containing protein 59 (LRRC59).